Reading from the N-terminus, the 118-residue chain is Na(+)/H(+) antiporter subunit G1 (118 aa).

Helical transmembrane passes span 9-29, 47-67, and 69-89; these read VSII…TGLI, LGAM…EGYV, and MQLI…SHLI.

The protein belongs to the CPA3 antiporters (TC 2.A.63) subunit G family. As to quaternary structure, may form a heterooligomeric complex that consists of seven subunits: mnhA1, mnhB1, mnhC1, mnhD1, mnhE1, mnhF1 and mnhG1.

It localises to the cell membrane. Mnh complex is a Na(+)/H(+) antiporter involved in Na(+) excretion. In Staphylococcus epidermidis (strain ATCC 35984 / DSM 28319 / BCRC 17069 / CCUG 31568 / BM 3577 / RP62A), this protein is Na(+)/H(+) antiporter subunit G1 (mnhG1).